A 335-amino-acid chain; its full sequence is N-acetylglucosaminyl-phosphatidylinositol de-N-acetylase (335 aa).

Residues 3-23 (SAFTFLSLAIFPLALFIFWTL) traverse the membrane as a helical segment. N-linked (GlcNAc...) asparagine glycosylation is found at Asn-128 and Asn-153.

The protein belongs to the PIGL family.

It is found in the endoplasmic reticulum membrane. It carries out the reaction a 6-(N-acetyl-alpha-D-glucosaminyl)-1-(1,2-diacyl-sn-glycero-3-phospho)-1D-myo-inositol + H2O = a 6-(alpha-D-glucosaminyl)-1-(1,2-diacyl-sn-glycero-3-phospho)-1D-myo-inositol + acetate. It participates in glycolipid biosynthesis; glycosylphosphatidylinositol-anchor biosynthesis. Involved in the second step of GPI biosynthesis. De-N-acetylation of N-acetylglucosaminyl-phosphatidylinositol. In Arthroderma benhamiae (strain ATCC MYA-4681 / CBS 112371) (Trichophyton mentagrophytes), this protein is N-acetylglucosaminyl-phosphatidylinositol de-N-acetylase.